We begin with the raw amino-acid sequence, 957 residues long: Calsyntenin-3 (957 aa).

A signal peptide spans 1–19 (MTLLLVSLLLASLLQISSG). Over 1-21 (MTLLLVSLLLASLLQISSGNK) the chain is Cytoplasmic. The Extracellular portion of the chain corresponds to 20–848 (NKANKHKPWI…SHRNSMVPSA (829 aa)). An intramembrane region (helical) is located at residues 22–42 (ANKHKPWIEAEYQGIVMENDN). Cadherin domains are found at residues 29 to 145 (IEAE…APVF) and 146 to 246 (VERL…KPSW). Residues 43 to 73 (TVLLNPPLFALDKDAPLRYAGEICGFRLHGS) are Cytoplasmic-facing. Positions 74-94 (GVPFKAVILDKATGEGLIRAK) form an intramembrane region, helical. Over 95–139 (EPVDCEAQKEHTFTTQAYDCVDGPDGANTKKSHKATVHVRVNDVN) the chain is Cytoplasmic. An intramembrane region (helical) is located at residues 140–160 (EFAPVFVERLYRAAVTEGKLY). Residues 161–248 (DRILRVEAID…KPTCKPSWQG (88 aa)) lie on the Cytoplasmic side of the membrane. Residues 249–269 (WNKRIEYAPGAGSLALFPGIR) traverse the membrane as a helical segment. The Lumenal portion of the chain corresponds to 270 to 357 (LETCDEPLWN…GTQAVQVPLG (88 aa)). N-linked (GlcNAc...) asparagine glycosylation is found at N299, N327, N347, N508, and N741. Residues 849–869 (ATLIIVVCVGFLVLMVILGLV) traverse the membrane as a helical segment. Over 870–957 (RIHSLHRRVS…RIIESPPHRY (88 aa)) the chain is Cytoplasmic. The segment at 916–957 (QQTGVAGVAGGQQEEEDSSDSEAADSPSSDERRIIESPPHRY) is disordered. Residues 928-938 (QEEEDSSDSEA) show a composition bias toward acidic residues. The span at 944–957 (SDERRIIESPPHRY) shows a compositional bias: basic and acidic residues.

Belongs to the calsyntenin family. As to quaternary structure, interacts (via cadherin domains) with both alpha and beta isoforms of neurexins (NRXN1, NRXN2 and NRXN3). Directly interacts with APBA2. Forms a tripartite complex with APBA2 and APP. Interacts with low affinity with KLC1. Interacts with SLC23A2/SVCT2. In terms of assembly, interacts with CIDEA; inhibiting the lipid transferase activity of CIDEA. Interacts with CIDEC; inhibiting the lipid transferase activity of CIDEC. In terms of processing, proteolytically processed under normal cellular conditions. A primary zeta-cleavage generates a large extracellular (soluble) N-terminal domain (sAlc) and a short C-terminal transmembrane fragment (CTF1). A secondary cleavage catalyzed by gamma-secretase within the transmembrane domain releases the beta-Alc-beta chain in the extracellular milieu and produces an intracellular fragment (AlcICD). This processing is strongly suppressed in the tripartite complex formed with APBA2 and APP, which seems to prevent the association with gamma-secretase. Ubiquitinated: endoplasmic reticulum-localized protein is ubiquitinated and degraded by the endoplasmic reticulum-associated degradation (ERAD) pathway.

The protein localises to the postsynaptic cell membrane. Its subcellular location is the endoplasmic reticulum membrane. It is found in the golgi apparatus membrane. It localises to the cell projection. The protein resides in the dendrite. The protein localises to the lipid droplet. Postsynaptic adhesion molecule that binds to presynaptic neurexins to mediate both excitatory and inhibitory synapse formation. Promotes synapse development by acting as a cell adhesion molecule at the postsynaptic membrane, which associates with both neurexin-alpha and neurexin-beta proteins at the presynaptic membrane. Regulates the balance between excitatory and inhibitory synapses by inhibiting formation of excitatory parallel-fiber synapses and promoting formation of inhibitory synapses in the same neuron. May also be involved in ascorbate (vitamin C) uptake via its interaction with SLC23A2/SVCT2. Complex formation with APBA2 and APP, stabilizes APP metabolism and enhances APBA2-mediated suppression of beta-APP40 secretion, due to the retardation of intracellular APP maturation. Functionally, adipose-specific isoform that plays a key role in adaptive thermogenesis. Facilitates the efficient use of stored triglyceride by promoting multilocular morphology of thermogenic adipocytes: acts by inhibiting the activity of CIDEA and CIDEC on lipid droplets, thereby preventing lipid droplet fusion and facilitating lipid utilization. May also participate in adaptive thermogenesis by promoting sympathetic innervation of thermogenic adipose tissue: acts by driving secretion of neurotrophic factor S100B from brown adipocytes, stimulating neurite outgrowth from sympathetic neurons. This Rattus norvegicus (Rat) protein is Calsyntenin-3.